Reading from the N-terminus, the 182-residue chain is MPFDKQNLIWIDLEMTGLDPEKERIIEIATIVTDKNLNILAEGPVLAVHQSDELLNKMNDWCQKTHSENGLIERVKASKLTERAAELQTLDFLKKWVPKGASPICGNSIAQDKRFLVKYMPDLADYFHYRHLDVSTLKELAARWKPEILEGFKKENTHLALDDIRESIKELAYYREHFMKLD.

Residues 8–171 form the Exonuclease domain; it reads LIWIDLEMTG…DDIRESIKEL (164 aa). Y129 is an active-site residue.

Belongs to the oligoribonuclease family.

It localises to the cytoplasm. Its function is as follows. 3'-to-5' exoribonuclease specific for small oligoribonucleotides. The chain is Oligoribonuclease from Haemophilus influenzae (strain 86-028NP).